A 260-amino-acid polypeptide reads, in one-letter code: Putative enoyl-CoA hydratase/isomerase YngF (260 aa).

Belongs to the enoyl-CoA hydratase/isomerase family.

This is Putative enoyl-CoA hydratase/isomerase YngF (yngF) from Bacillus subtilis (strain 168).